The following is a 76-amino-acid chain: Cytochrome c oxidase subunit 6C (76 aa).

The Mitochondrial matrix segment spans residues 4–22 (GALLPKPQMRGLLAKRLRV). Residues 23-44 (HIAGAFIVALGVAAAYKFGVAE) form a helical membrane-spanning segment. Residues 45 to 76 (PRKKAYAEFYRNYDSMKDFEEMRKAGIFQSAK) lie on the Mitochondrial intermembrane side of the membrane.

This sequence belongs to the cytochrome c oxidase subunit 6c family. As to quaternary structure, component of the cytochrome c oxidase (complex IV, CIV), a multisubunit enzyme composed of 14 subunits. The complex is composed of a catalytic core of 3 subunits MT-CO1, MT-CO2 and MT-CO3, encoded in the mitochondrial DNA, and 11 supernumerary subunits COX4I, COX5A, COX5B, COX6A, COX6B, COX6C, COX7A, COX7B, COX7C, COX8 and NDUFA4, which are encoded in the nuclear genome. The complex exists as a monomer or a dimer and forms supercomplexes (SCs) in the inner mitochondrial membrane with NADH-ubiquinone oxidoreductase (complex I, CI) and ubiquinol-cytochrome c oxidoreductase (cytochrome b-c1 complex, complex III, CIII), resulting in different assemblies (supercomplex SCI(1)III(2)IV(1) and megacomplex MCI(2)III(2)IV(2)). Post-translationally, acetylation of Lys-61 is observed in liver mitochondria from fasted mice but not from fed mice.

It localises to the mitochondrion inner membrane. The protein operates within energy metabolism; oxidative phosphorylation. Component of the cytochrome c oxidase, the last enzyme in the mitochondrial electron transport chain which drives oxidative phosphorylation. The respiratory chain contains 3 multisubunit complexes succinate dehydrogenase (complex II, CII), ubiquinol-cytochrome c oxidoreductase (cytochrome b-c1 complex, complex III, CIII) and cytochrome c oxidase (complex IV, CIV), that cooperate to transfer electrons derived from NADH and succinate to molecular oxygen, creating an electrochemical gradient over the inner membrane that drives transmembrane transport and the ATP synthase. Cytochrome c oxidase is the component of the respiratory chain that catalyzes the reduction of oxygen to water. Electrons originating from reduced cytochrome c in the intermembrane space (IMS) are transferred via the dinuclear copper A center (CU(A)) of subunit 2 and heme A of subunit 1 to the active site in subunit 1, a binuclear center (BNC) formed by heme A3 and copper B (CU(B)). The BNC reduces molecular oxygen to 2 water molecules using 4 electrons from cytochrome c in the IMS and 4 protons from the mitochondrial matrix. The chain is Cytochrome c oxidase subunit 6C (Cox6c) from Mus musculus (Mouse).